The chain runs to 948 residues: Zinc finger CCCH domain-containing protein 3 (948 aa).

Disordered regions lie at residues 25 to 108 (HGNA…VPQQ), 121 to 219 (QNVV…RRTV), 265 to 296 (VDAG…REAS), and 336 to 493 (NVCK…LKKT). Positions 56-74 (RPSRRGYSSHHGPSWRKKY) are enriched in basic residues. Positions 128-141 (KPPSKSGSASASGA) are enriched in low complexity. Residues 157 to 166 (QRPREGEGEP) are compositionally biased toward basic and acidic residues. Residues 372 to 398 (SAPSKYKWKASSPSASSSSSFRWQSEA) are compositionally biased toward low complexity. Over residues 405–415 (SQLSPVLSRSP) the composition is skewed to polar residues. Residue S408 is modified to Phosphoserine. Over residues 441 to 452 (VKSRTKIIRRRS) the composition is skewed to basic residues. C3H1-type zinc fingers lie at residues 667–695 (EKRK…HDPE), 699–722 (VCTR…HHVS), 723–749 (KEKM…HVYV), 750–777 (SRKA…HTLL), and 778–800 (CPDF…HRTQ). Disordered stretches follow at residues 798 to 891 (RTQK…HEAP) and 913 to 948 (ISLQ…KPRL). Positions 834-846 (SASQRPTRQTPSS) are enriched in polar residues. Low complexity-rich tracts occupy residues 847-856 (AALTAAAVAA) and 864-885 (SASP…PPAS). 2 positions are modified to phosphoserine: S918 and S920.

As to quaternary structure, interacts with SMAD1, SMAD3, SMAD4, CPSF2 and CPSF3.

It is found in the nucleus. In terms of biological role, required for the export of polyadenylated mRNAs from the nucleus. Enhances ACVR1B-induced SMAD-dependent transcription. Binds to single-stranded DNA but not to double-stranded DNA in vitro. Involved in RNA cleavage. This chain is Zinc finger CCCH domain-containing protein 3 (ZC3H3), found in Homo sapiens (Human).